A 327-amino-acid chain; its full sequence is Prenyl transferase janC (327 aa).

A helical transmembrane segment spans residues 3–23; sequence FPGAGPILGAIAVSSCLYFLF. Isopentenyl diphosphate-binding residues include Lys63 and His96. 2 residues coordinate Mg(2+): Asp103 and Asp107. The dimethylallyl diphosphate site is built by Arg112 and Lys196. Asn211 carries N-linked (GlcNAc...) asparagine glycosylation.

The protein belongs to the FPP/GGPP synthase family.

The protein resides in the membrane. Its pathway is secondary metabolite biosynthesis. Prenyl transferase; part of the gene cluster that mediates the biosynthesis of the indole diterpenes janthitremanes such as shearinine K or shearinine A. The geranylgeranyl diphosphate (GGPP) synthase janG catalyzes the first step in janthitremane biosynthesis via conversion of farnesyl pyrophosphate and isopentyl pyrophosphate into geranylgeranyl pyrophosphate (GGPP). Condensation of indole-3-glycerol phosphate with GGPP by the prenyl transferase janC then forms 3-geranylgeranylindole (3-GGI). Epoxidation by the FAD-dependent monooxygenase janM leads to a epoxidized-GGI that is substrate of the terpene cyclase janB for cyclization to yield paspaline. Paspaline is subsequently converted to 13-desoxypaspaline by the cytochrome P450 monooxygenase janP, via beta-PC-M6 in a series of alpha-face oxidations. The cytochrome P450 monooxygenase janQ is proposed to carry out sequential beta-face oxidation steps at C-7 and C-13 of 13-desoxypaspaline to form paspalicine and paspalinine respectively. The indole diterpene prenyltransferase janD may then convert paspalinine into shearinine K which is substrate of janO and/or additional enzymes for oxidation and cyclization to generate shearinine A. The sequence is that of Prenyl transferase janC from Penicillium janthinellum (Penicillium vitale).